Consider the following 151-residue polypeptide: NDYAELEGKWDTIAIAADNDAKIKEEGPLRLYVRELYCNEDCSEMEVTFYVNANNQCSKTTVIGYKQADGTYRTQFEGDNRFQPVYATPENIVFTSKNVDRAGQETNLIFVVGKSQPLTPEQHEKLVEFAHENNIPEENIHNVLATDTCPK.

Intrachain disulfides connect cysteine 38–cysteine 42 and cysteine 57–cysteine 149.

This sequence belongs to the calycin superfamily. Lipocalin family. In terms of tissue distribution, expressed in salivary glands, hair and urine.

Its subcellular location is the secreted. In terms of biological role, may act as a pheromone. This is Odorant-binding protein from Phodopus sungorus (Striped hairy-footed hamster).